Reading from the N-terminus, the 274-residue chain is Rhamnulose-1-phosphate aldolase (274 aa).

Residue Glu117 is part of the active site. Residues His141, His143, and His212 each coordinate Zn(2+).

This sequence belongs to the aldolase class II family. RhaD subfamily. In terms of assembly, homotetramer. Zn(2+) is required as a cofactor.

It localises to the cytoplasm. The catalysed reaction is L-rhamnulose 1-phosphate = (S)-lactaldehyde + dihydroxyacetone phosphate. It functions in the pathway carbohydrate degradation; L-rhamnose degradation; glycerone phosphate from L-rhamnose: step 3/3. Its function is as follows. Catalyzes the reversible cleavage of L-rhamnulose-1-phosphate to dihydroxyacetone phosphate (DHAP) and L-lactaldehyde. The sequence is that of Rhamnulose-1-phosphate aldolase from Shigella boydii serotype 4 (strain Sb227).